The primary structure comprises 139 residues: NADPH-dependent 7-cyano-7-deazaguanine reductase (139 aa).

Cys34 serves as the catalytic Thioimide intermediate. Asp41 (proton donor) is an active-site residue. Residues 56 to 58 and 75 to 76 contribute to the substrate site; these read VEL and HE.

The protein belongs to the GTP cyclohydrolase I family. QueF type 1 subfamily.

Its subcellular location is the cytoplasm. The catalysed reaction is 7-aminomethyl-7-carbaguanine + 2 NADP(+) = 7-cyano-7-deazaguanine + 2 NADPH + 3 H(+). It functions in the pathway tRNA modification; tRNA-queuosine biosynthesis. Functionally, catalyzes the NADPH-dependent reduction of 7-cyano-7-deazaguanine (preQ0) to 7-aminomethyl-7-deazaguanine (preQ1). In Thiobacillus denitrificans (strain ATCC 25259 / T1), this protein is NADPH-dependent 7-cyano-7-deazaguanine reductase.